The primary structure comprises 34 residues: COP9 signalosome complex subunit 5a (34 aa).

The protein belongs to the peptidase M67A family. CSN5 subfamily. As to quaternary structure, component of the CSN complex, probably composed of CSN1, CSN2, CSN3, CSN4, CSN5 (CSN5A or CSN5B), CSN6 (CSN6A or CSN6B), CSN7 and CSN8. It depends on a divalent metal cation as a cofactor.

The protein localises to the cytoplasm. It localises to the nucleus. Its function is as follows. Probable protease subunit of the COP9 signalosome complex (CSN), a complex involved in various cellular and developmental processes such as photomorphogenesis and auxin and jasmonate responses. The CSN complex is an essential regulator of the ubiquitin (Ubl) conjugation pathway by mediating the deneddylation of the cullin subunits of the SCF-type E3 ligase complexes, leading to decrease the Ubl ligase activity of SCF. In the complex, it probably acts as the catalytic center that mediates the cleavage of Nedd8 from cullins. It however has no metalloprotease activity by itself and requires the other subunits of the CSN complex. The CSN complex is involved in repression of photomorphogenesis in darkness by regulating the activity of COP1-containing Ubl ligase complexes. This chain is COP9 signalosome complex subunit 5a (CSN5A), found in Brassica oleracea (Wild cabbage).